Reading from the N-terminus, the 204-residue chain is dITP/XTP pyrophosphatase (204 aa).

7-12 (TNNKDK) contacts substrate. Positions 38 and 74 each coordinate Mg(2+). Residue Asp-74 is the Proton acceptor of the active site. Substrate is bound by residues Ser-75, 156-159 (FGYD), Lys-179, and 184-185 (HR).

This sequence belongs to the HAM1 NTPase family. As to quaternary structure, homodimer. Mg(2+) serves as cofactor.

The catalysed reaction is XTP + H2O = XMP + diphosphate + H(+). The enzyme catalyses dITP + H2O = dIMP + diphosphate + H(+). It catalyses the reaction ITP + H2O = IMP + diphosphate + H(+). Pyrophosphatase that catalyzes the hydrolysis of nucleoside triphosphates to their monophosphate derivatives, with a high preference for the non-canonical purine nucleotides XTP (xanthosine triphosphate), dITP (deoxyinosine triphosphate) and ITP. Seems to function as a house-cleaning enzyme that removes non-canonical purine nucleotides from the nucleotide pool, thus preventing their incorporation into DNA/RNA and avoiding chromosomal lesions. This Campylobacter fetus subsp. fetus (strain 82-40) protein is dITP/XTP pyrophosphatase.